The primary structure comprises 749 residues: Transcription factor RFX3 (749 aa).

The segment at residues 183-258 (HLQWLLDNYE…YHYYGIRVKP (76 aa)) is a DNA-binding region (RFX-type winged-helix). Residues 663–699 (VSPGNLDKDEGSEVESETDEDLDDSSEPRAKREKTEL) are disordered. Residues 674 to 687 (SEVESETDEDLDDS) show a composition bias toward acidic residues. The span at 688 to 698 (SEPRAKREKTE) shows a compositional bias: basic and acidic residues.

Belongs to the RFX family. In terms of assembly, heterodimer; heterodimerizes with RFX1 and RFX2, and RFX6. Expressed in ciliated cells of the node and in the ciliated ependymal cells of the subcommissural organ (SCO), choroid plexuses (CP) and ventricular walls during embryonic and postnatal development. Expressed in developing and mature pancreatic endocrine cells during embryogenesis and in adults (at protein level).

Its subcellular location is the nucleus. Transcription factor required for ciliogenesis and islet cell differentiation during endocrine pancreas development. Essential for the differentiation of nodal monocilia and left-right asymmetry specification during embryogenesis. Required for the biogenesis of motile cilia by governing growth and beating efficiency of motile cells. Also required for ciliated ependymal cell differentiation. Together with RFX6, participates in the differentiation of 4 of the 5 islet cell types during endocrine pancreas development, with the exception of pancreatic PP (polypeptide-producing) cells. Regulates transcription by forming a heterodimer with another RFX protein and binding to the X-box in the promoter of target genes. Regulates the expression of genes involved in ciliary assembly (DYNC2LI1, FOXJ1 and BBS4) and genes involved in ciliary motility (DNAH11, DNAH9 and DNAH5). Represses transcription of MAP1A in non-neuronal cells but not in neuronal cells. The chain is Transcription factor RFX3 (Rfx3) from Mus musculus (Mouse).